We begin with the raw amino-acid sequence, 88 residues long: Low calcium response locus protein S (88 aa).

It belongs to the transposase 8 family.

The chain is Low calcium response locus protein S (lcrS) from Yersinia pestis.